A 508-amino-acid chain; its full sequence is CBL-interacting protein kinase 19 (508 aa).

A disordered region spans residues 1–24 (MAATPPSSQHRRPLSSSASAASLA). The segment covering 14–24 (LSSSASAASLA) has biased composition (low complexity). The 255-residue stretch at 37 to 291 (YELGRLLGHG…VKEVMESRWF (255 aa)) folds into the Protein kinase domain. Residues 43–51 (LGHGTFAKV) and K66 each bind ATP. D159 acts as the Proton acceptor in catalysis. The interval 177–206 (DFGLSAVADQFHPDGLLHTFCGTPSYVAPE) is activation loop. Residues 311-372 (ADGDNDMPEL…EERRQRPLGS (62 aa)) are disordered. Over residues 313–322 (GDNDMPELEP) the composition is skewed to acidic residues. The span at 323–337 (SEPPPPPPFPPPPPQ) shows a compositional bias: pro residues. Acidic residues predominate over residues 338–347 (QDDDGEESGW). The NAF domain maps to 354-398 (ASCPATLSSEERRQRPLGSLTRPASLNAFDIISFSKGFDLSGLFE). Residues 401-430 (GSEVRFISAEPMQTIITKLEEIAKVKSFFV) form a PPI region.

Belongs to the protein kinase superfamily. CAMK Ser/Thr protein kinase family. SNF1 subfamily. Requires Mn(2+) as cofactor. Autophosphorylated. As to expression, expressed in roots, leaf blades and sheaths and panicles.

It catalyses the reaction L-seryl-[protein] + ATP = O-phospho-L-seryl-[protein] + ADP + H(+). The catalysed reaction is L-threonyl-[protein] + ATP = O-phospho-L-threonyl-[protein] + ADP + H(+). CIPK serine-threonine protein kinases interact with CBL proteins. Binding of a CBL protein to the regulatory NAF domain of CIPK protein lead to the activation of the kinase in a calcium-dependent manner. In Oryza sativa subsp. japonica (Rice), this protein is CBL-interacting protein kinase 19 (CIPK19).